We begin with the raw amino-acid sequence, 216 residues long: Pyrrolidone-carboxylate peptidase (216 aa).

Residues Glu80, Cys143, and His168 contribute to the active site.

Belongs to the peptidase C15 family. Homotetramer.

The protein resides in the cytoplasm. The enzyme catalyses Release of an N-terminal pyroglutamyl group from a polypeptide, the second amino acid generally not being Pro.. Its function is as follows. Removes 5-oxoproline from various penultimate amino acid residues except L-proline. In Cupriavidus pinatubonensis (strain JMP 134 / LMG 1197) (Cupriavidus necator (strain JMP 134)), this protein is Pyrrolidone-carboxylate peptidase.